The chain runs to 695 residues: Elongation factor G 2 (695 aa).

A tr-type G domain is found at 5-280 (SLYRNIGIFA…AVVDYLPSPT (276 aa)). GTP-binding positions include 14–21 (AHVDAGKT), 78–82 (DTPGH), and 132–135 (NKLD).

Belongs to the TRAFAC class translation factor GTPase superfamily. Classic translation factor GTPase family. EF-G/EF-2 subfamily.

The protein localises to the cytoplasm. Catalyzes the GTP-dependent ribosomal translocation step during translation elongation. During this step, the ribosome changes from the pre-translocational (PRE) to the post-translocational (POST) state as the newly formed A-site-bound peptidyl-tRNA and P-site-bound deacylated tRNA move to the P and E sites, respectively. Catalyzes the coordinated movement of the two tRNA molecules, the mRNA and conformational changes in the ribosome. The chain is Elongation factor G 2 from Vibrio cholerae serotype O1 (strain ATCC 39315 / El Tor Inaba N16961).